The sequence spans 468 residues: Argininosuccinate lyase (468 aa).

It belongs to the lyase 1 family. Argininosuccinate lyase subfamily.

The protein localises to the cytoplasm. It carries out the reaction 2-(N(omega)-L-arginino)succinate = fumarate + L-arginine. It participates in amino-acid biosynthesis; L-arginine biosynthesis; L-arginine from L-ornithine and carbamoyl phosphate: step 3/3. This is Argininosuccinate lyase from Paraburkholderia phytofirmans (strain DSM 17436 / LMG 22146 / PsJN) (Burkholderia phytofirmans).